Here is an 889-residue protein sequence, read N- to C-terminus: Coatomer subunit gamma-2 (889 aa).

5 HEAT repeats span residues 67–102 (VEAT…SPSA), 103–140 (DEVI…STLL), 289–326 (RELT…THPL), 328–360 (VTNC…TGNE), and 361–398 (SSVD…KFPL). Positions 596–617 (PLAEKKTTGKKPTGPASALSGP) are disordered.

Belongs to the COPG family. As to quaternary structure, oligomeric complex that consists of at least the alpha, beta, beta', gamma, delta, epsilon and zeta subunits.

Its subcellular location is the cytoplasm. The protein resides in the golgi apparatus membrane. It localises to the cytoplasmic vesicle. It is found in the COPI-coated vesicle membrane. In terms of biological role, the coatomer is a cytosolic protein complex that binds to dilysine motifs and reversibly associates with Golgi non-clathrin-coated vesicles, which further mediate biosynthetic protein transport from the ER, via the Golgi up to the trans Golgi network. Coatomer complex is required for budding from Golgi membranes, and is essential for the retrograde Golgi-to-ER transport of dilysine-tagged proteins. This chain is Coatomer subunit gamma-2, found in Oryza sativa subsp. japonica (Rice).